A 103-amino-acid polypeptide reads, in one-letter code: 6-pyruvoyl tetrahydrobiopterin synthase (103 aa).

Residue A1 is modified to N-acetylalanine. H27 serves as a coordination point for Zn(2+). Residues H53 and E92 each act as charge relay system in the active site.

This sequence belongs to the PTPS family. Homohexamer formed of two homotrimers in a head to head fashion. Zn(2+) is required as a cofactor.

The catalysed reaction is 7,8-dihydroneopterin 3'-triphosphate = 6-pyruvoyl-5,6,7,8-tetrahydropterin + triphosphate + H(+). The protein operates within cofactor biosynthesis; tetrahydrobiopterin biosynthesis; tetrahydrobiopterin from 7,8-dihydroneopterin triphosphate: step 1/3. In terms of biological role, involved in the biosynthesis of tetrahydrobiopterin, an essential cofactor of aromatic amino acid hydroxylases. Catalyzes the transformation of 7,8-dihydroneopterin triphosphate into 6-pyruvoyl tetrahydropterin. The chain is 6-pyruvoyl tetrahydrobiopterin synthase (pts) from Salmo salar (Atlantic salmon).